We begin with the raw amino-acid sequence, 237 residues long: Leucyl/phenylalanyl-tRNA--protein transferase (237 aa).

Belongs to the L/F-transferase family.

It is found in the cytoplasm. The catalysed reaction is N-terminal L-lysyl-[protein] + L-leucyl-tRNA(Leu) = N-terminal L-leucyl-L-lysyl-[protein] + tRNA(Leu) + H(+). The enzyme catalyses N-terminal L-arginyl-[protein] + L-leucyl-tRNA(Leu) = N-terminal L-leucyl-L-arginyl-[protein] + tRNA(Leu) + H(+). It catalyses the reaction L-phenylalanyl-tRNA(Phe) + an N-terminal L-alpha-aminoacyl-[protein] = an N-terminal L-phenylalanyl-L-alpha-aminoacyl-[protein] + tRNA(Phe). Its function is as follows. Functions in the N-end rule pathway of protein degradation where it conjugates Leu, Phe and, less efficiently, Met from aminoacyl-tRNAs to the N-termini of proteins containing an N-terminal arginine or lysine. This is Leucyl/phenylalanyl-tRNA--protein transferase from Shewanella baltica (strain OS185).